Reading from the N-terminus, the 770-residue chain is Disabled homolog 2 (770 aa).

The span at 1–16 (MSNEVETSATNGQPDQ) shows a compositional bias: polar residues. Positions 1 to 38 (MSNEVETSATNGQPDQQAAPKAPSKKEKKKGPEKTDEY) are disordered. Residue serine 2 is modified to N-acetylserine. Serine 2 carries the post-translational modification Phosphoserine. The region spanning 45 to 196 (GDGVKYKAKL…KAVENGSEAL (152 aa)) is the PID domain. Phosphotyrosine is present on tyrosine 170. Serine 193 bears the Phosphoserine mark. The segment at 230–447 (ESKDILLVDL…KPGRGRRTAK (218 aa)) is required for localization to clathrin-coated pits. Disordered regions lie at residues 284–482 (LNFF…LQPN) and 604–629 (VSTQ…AGPP). 2 short sequence motifs (DPF) span residues 293 to 295 (DPF) and 298 to 300 (DPF). Polar residues predominate over residues 302-313 (QPDQSTPSSFDS). 2 positions are modified to phosphoserine; in mitosis: serine 326 and serine 328. The span at 366-396 (FSSSQTQPAVRTQNGVSEREQNGFSVKSSPN) shows a compositional bias: polar residues. At serine 401 the chain carries Phosphoserine. Composition is skewed to polar residues over residues 407–425 (SIQN…SSPH), 466–480 (PSGQ…TALQ), and 604–616 (VSTQ…SSLL). The tract at residues 604 to 732 (VSTQPPSMHS…SLPVTKSTDN (129 aa)) is sufficient for interaction with GRB2. The segment at 619-627 (PPQPPPRAG) is required for interaction with CSK. The required for interaction with MYO6 stretch occupies residues 649–770 (KDVKEMFKDF…YRDPFGNPFA (122 aa)). The required for interaction with GRB2 and CSK stretch occupies residues 663 to 671 (PPAVPARKG). Phosphoserine occurs at positions 675, 723, and 729. The sufficient for interaction with SH3KBP1 SH3 domain stretch occupies residues 709–725 (NKINEPPKPAPRQVSLP). The disordered stretch occupies residues 742–770 (SFGSSQASVASSQPVSSEMYRDPFGNPFA). Low complexity predominate over residues 745-758 (SSQASVASSQPVSS).

In terms of assembly, interacts (via NPXY motif) with DAB2 (via PID domain). Can interact (via PID domain) with LDLR, APP, APLP1 and APLP2, and weakly with INPP5D (via NPXY motifs); the interaction is impaired by tyrosine phosphorylation of the respective NPXY motifs. Can weakly interact (via PID domain) with LRP1 (via NPXY motif); the interaction is enhanced by tyrosine phosphorylation of the NPXY motif. Interacts with LRP2 (via NPXY motif); the interaction is not affected by tyrosine phosphorylation of the NPXY motif. Interacts with clathrin; in vitro can assemble clathrin triskelia into polyhedral coats. Interacts with AP2A2, ITGB1, ITGB3, ITGB5, PIAS2, DAB2IP, NOSTRIN, FCHO1, DVL3, EPS15, ITSN1 and EPS15L1. Interacts with SH3KBP1 (via SH3 domains). Interacts with GRB2; competes with SOS1 for binding to GRB2 and the interaction is enhanced by EGF and NT-3 stimulation. Interacts with MAP3K7; the interaction is induced by TGF-beta stimulation and may mediate TGF-beta stimulated JNK activation. Interacts with AXIN1 and PPP1CA; the interactions are mutually exclusive. Interacts with the globular tail of MYO6. Interacts (via DPF motifs) with FCHO2; the interaction is direct and required for DAB2-mediated LDLR endocytosis. Interacts with LRP6; the interaction involves LRP6 phosphorylation by CK2 and sequesters LRP6 towards clathrin-mediated endocytosis. Associates with the TGF-beta receptor complex. Interacts with SMAD2 and SMAD3; the interactions are enhanced upon TGF-beta stimulation. Interacts with GRB2; the interaction is enhanced by EGF and NT-3 stimulation. Interacts with SRC; the interaction is enhanced by EGF stimulation. In terms of processing, phosphorylated. Phosphorylation during mitosis is leading to membrane displacement. In terms of tissue distribution, expressed in deep invaginations, inclusion cysts and the surface epithelial cells of the ovary. Also expressed in breast epithelial cells, spleen, thymus, prostate, testis, macrophages, fibroblasts, lung epithelial cells, placenta, brain stem, heart and small intestine. Expressed in kidney proximal tubular epithelial cells (at protein level).

The protein resides in the cytoplasm. It is found in the cytoplasmic vesicle. It localises to the clathrin-coated vesicle membrane. Its subcellular location is the membrane. The protein localises to the clathrin-coated pit. In terms of biological role, adapter protein that functions as a clathrin-associated sorting protein (CLASP) required for clathrin-mediated endocytosis of selected cargo proteins. Can bind and assemble clathrin, and binds simultaneously to phosphatidylinositol 4,5-bisphosphate (PtdIns(4,5)P2) and cargos containing non-phosphorylated NPXY internalization motifs, such as the LDL receptor, to recruit them to clathrin-coated pits. Can function in clathrin-mediated endocytosis independently of the AP-2 complex. Involved in endocytosis of integrin beta-1; this function seems to redundant with the AP-2 complex and seems to require DAB2 binding to endocytosis accessory EH domain-containing proteins such as EPS15, EPS15L1 and ITSN1. Involved in endocytosis of cystic fibrosis transmembrane conductance regulator/CFTR. Involved in endocytosis of megalin/LRP2 lipoprotein receptor during embryonal development. Required for recycling of the TGF-beta receptor. Involved in CFTR trafficking to the late endosome. Involved in several receptor-mediated signaling pathways. Involved in TGF-beta receptor signaling and facilitates phosphorylation of the signal transducer SMAD2. Mediates TFG-beta-stimulated JNK activation. May inhibit the canoniocal Wnt/beta-catenin signaling pathway by stabilizing the beta-catenin destruction complex through a competing association with axin preventing its dephosphorylation through protein phosphatase 1 (PP1). Sequesters LRP6 towards clathrin-mediated endocytosis, leading to inhibition of Wnt/beta-catenin signaling. May activate non-canonical Wnt signaling. In cell surface growth factor/Ras signaling pathways proposed to inhibit ERK activation by interrupting the binding of GRB2 to SOS1 and to inhibit SRC by preventing its activating phosphorylation at 'Tyr-419'. Proposed to be involved in modulation of androgen receptor (AR) signaling mediated by SRC activation; seems to compete with AR for interaction with SRC. Plays a role in the CSF-1 signal transduction pathway. Plays a role in cellular differentiation. Involved in cell positioning and formation of visceral endoderm (VE) during embryogenesis and proposed to be required in the VE to respond to Nodal signaling coming from the epiblast. Required for the epithelial to mesenchymal transition, a process necessary for proper embryonic development. May be involved in myeloid cell differentiation and can induce macrophage adhesion and spreading. May act as a tumor suppressor. This is Disabled homolog 2 (DAB2) from Homo sapiens (Human).